The primary structure comprises 340 residues: Geranylgeranyl pyrophosphate synthase atmG (340 aa).

Residues 19 to 48 (NLDASYPTSSSLSTEPIDTRSSSPQGSAST) are compositionally biased toward polar residues. Residues 19-51 (NLDASYPTSSSLSTEPIDTRSSSPQGSASTPVD) form a disordered region. Lys69, Arg72, and His101 together coordinate isopentenyl diphosphate. Mg(2+) is bound by residues Asp108 and Asp112. Position 117 (Arg117) interacts with dimethylallyl diphosphate. Arg118 contacts isopentenyl diphosphate. Residues Lys195, Thr196, and Gln229 each contribute to the dimethylallyl diphosphate site. Residue Asp232 coordinates Mg(2+). Dimethylallyl diphosphate is bound by residues Asn236, Lys246, and Lys256.

Belongs to the FPP/GGPP synthase family. Requires Mg(2+) as cofactor.

It catalyses the reaction isopentenyl diphosphate + dimethylallyl diphosphate = (2E)-geranyl diphosphate + diphosphate. It carries out the reaction isopentenyl diphosphate + (2E)-geranyl diphosphate = (2E,6E)-farnesyl diphosphate + diphosphate. The enzyme catalyses isopentenyl diphosphate + (2E,6E)-farnesyl diphosphate = (2E,6E,10E)-geranylgeranyl diphosphate + diphosphate. Functionally, geranylgeranyl pyrophosphate synthase; part of the ATM1 gene cluster that mediates the biosynthesis of aflatrem, a tremorgenic mycotoxin with acute neurotoxic effects. Synthesis of geranylgeranyl diphosphate (GGPP) by AtmG (a GGPP synthase) precedes condensation of GGPP with indole 3-glycerol phosphate, followed by epoxidation and cyclization by AtmM (a FAD-dependent monooxygenase) and AtmC (a prenyltransferase) to produce paspaline. AtmB is also essential for paspaline production, but its exact role has not been identified yet. AtmP, a cytochrome P450 monooxygenase, subsequently converts paspaline to 13-desoxypaxilline via PC-M6 by removal of the C-30 methyl group and oxidation at C-10. AtmQ, a cytochrome P450 monooxygenase, then catalyzes the oxidation of 13-desoxypaxilline, first at C-7 to produce paspalicine and then at C-13 to form paspalinine. Finally, AtmD prenylates paspalinine to form aflatrem. The sequence is that of Geranylgeranyl pyrophosphate synthase atmG from Aspergillus flavus.